Here is a 372-residue protein sequence, read N- to C-terminus: Probable G-protein coupled receptor 45 (372 aa).

Residues 1–38 (MACNSTSLEAYTYLLLNTSNASDSGSTQLPAPLRISLA) are Extracellular-facing. N4, N17, and N20 each carry an N-linked (GlcNAc...) asparagine glycan. Residues 39 to 59 (IVMLLMTVVGFLGNTVVCIIV) form a helical membrane-spanning segment. Topologically, residues 60–75 (YQRPAMRSAINLLLAT) are cytoplasmic. Residues 76-96 (LAFSDIMLSLCCMPFTAVTLI) traverse the membrane as a helical segment. Topologically, residues 97 to 109 (TVRWHFGDHFCRL) are extracellular. Residues 110–130 (SATLYWFFVLEGVAILLIISV) traverse the membrane as a helical segment. Residues 131–149 (DRFLIIVQRQDKLNPRRAK) are Cytoplasmic-facing. Residues 150–170 (VIIAVSWVLSFCIAGPSLTGW) form a helical membrane-spanning segment. At 171–198 (TLVEVPARAPQCVLGYTELPADRAYVVT) the chain is on the extracellular side. Residues 199 to 219 (LVVAVFFAPFGVMLCAYMCIL) traverse the membrane as a helical segment. Residues 220–268 (NTVRKNAVRVHNQSDSLDLRQLTRAGLRRLQRQQQVSVDLSFKTKAFTT) are Cytoplasmic-facing. Residues 269 to 289 (ILILFVGFSLCWLPHSVYSLL) traverse the membrane as a helical segment. Residues 290–305 (SVFSQRFYCGSSFYAT) are Extracellular-facing. Residues 306 to 326 (STCVLWLSYLKSVFNPIVYCW) traverse the membrane as a helical segment. The Cytoplasmic segment spans residues 327–372 (RIKKFREACIELLPQTFQILPKVPERIRRRIQPSTVYVCNENQSAV).

This sequence belongs to the G-protein coupled receptor 1 family. In terms of tissue distribution, expressed in brain; detected in the basal forebrain, frontal cortex, and caudate, but not in thalamus, hippocampus, or putamen.

It localises to the cell membrane. In terms of biological role, orphan receptor. May play a role in brain function. In Homo sapiens (Human), this protein is Probable G-protein coupled receptor 45 (GPR45).